Consider the following 84-residue polypeptide: Cell division topological specificity factor (84 aa).

The protein belongs to the MinE family.

Functionally, prevents the cell division inhibition by proteins MinC and MinD at internal division sites while permitting inhibition at polar sites. This ensures cell division at the proper site by restricting the formation of a division septum at the midpoint of the long axis of the cell. The chain is Cell division topological specificity factor from Burkholderia cenocepacia (strain ATCC BAA-245 / DSM 16553 / LMG 16656 / NCTC 13227 / J2315 / CF5610) (Burkholderia cepacia (strain J2315)).